The primary structure comprises 409 residues: Casein kinase II subunit alpha-1 (409 aa).

The first 35 residues, 1–35, serve as a signal peptide directing secretion; sequence MIDTLFFLFFLFFDSPLRRLLLLCAVLALRAPTAH. Asn72 carries an N-linked (GlcNAc...) asparagine glycan. The Protein kinase domain maps to 110–395; that stretch reads YEVVRKVGRG…AKEAMAHAYF (286 aa). ATP contacts are provided by residues 116–124 and Lys139; that span reads VGRGKYSEV. Asn188 carries N-linked (GlcNAc...) asparagine glycosylation. Residue Asp227 is the Proton acceptor of the active site.

Belongs to the protein kinase superfamily. Ser/Thr protein kinase family. CK2 subfamily. In terms of assembly, heterotetramer of two catalytic alpha subunits and two regulatory beta subunits. In terms of tissue distribution, seems to be present in all plant organs. But seems to be less expressed than CKA2.

The protein resides in the nucleus. Its subcellular location is the nucleolus. The catalysed reaction is L-seryl-[protein] + ATP = O-phospho-L-seryl-[protein] + ADP + H(+). The enzyme catalyses L-threonyl-[protein] + ATP = O-phospho-L-threonyl-[protein] + ADP + H(+). Inhibited by heparin. Casein kinases are operationally defined by their preferential utilization of acidic proteins such as caseins as substrates. Phosphorylates casein in vitro. The alpha chain contains the catalytic site. The tetrameric holoenzyme CK2, composed of two alpha and two beta subunits, phosphorylates the transcription factor GBFl, resulting in stimulation of its DNA binding activity. CK2 phosphorylates the transcription factor PIF1 after an exposure to light, resulting in a proteasome-dependent degradation of PIF1 and promotion of photomorphogenesis. CK2 phosphorylates translation initiation factors. May participate in the regulation of the initiation of translation. Acts as a circadian clock component that maintains the correct period length through phosphorylation of CCA1. Required for the maintenance and control of genomic stability and chromatin structure. May act as an ectokinase that phosphorylates several extracellular proteins. The chain is Casein kinase II subunit alpha-1 from Arabidopsis thaliana (Mouse-ear cress).